Reading from the N-terminus, the 663-residue chain is UvrABC system protein B (663 aa).

One can recognise a Helicase ATP-binding domain in the interval 31 to 418 (DNIEGGEKAQ…TDTVVEQIIR (388 aa)). ATP is bound at residue 44–51 (GATGTGKT). Residues 97–120 (YYDYYQPEAYVPSSDTYIEKDSSV) carry the Beta-hairpin motif. Residues 435–601 (QMDDLLGEIN…TIKKEIRDLI (167 aa)) enclose the Helicase C-terminal domain. In terms of domain architecture, UVR spans 627 to 662 (QAEIKALQQQMQEAAELLDFELAAQIRDVILELKAI).

Belongs to the UvrB family. Forms a heterotetramer with UvrA during the search for lesions. Interacts with UvrC in an incision complex.

The protein localises to the cytoplasm. Its function is as follows. The UvrABC repair system catalyzes the recognition and processing of DNA lesions. A damage recognition complex composed of 2 UvrA and 2 UvrB subunits scans DNA for abnormalities. Upon binding of the UvrA(2)B(2) complex to a putative damaged site, the DNA wraps around one UvrB monomer. DNA wrap is dependent on ATP binding by UvrB and probably causes local melting of the DNA helix, facilitating insertion of UvrB beta-hairpin between the DNA strands. Then UvrB probes one DNA strand for the presence of a lesion. If a lesion is found the UvrA subunits dissociate and the UvrB-DNA preincision complex is formed. This complex is subsequently bound by UvrC and the second UvrB is released. If no lesion is found, the DNA wraps around the other UvrB subunit that will check the other stand for damage. In Streptococcus agalactiae serotype III (strain NEM316), this protein is UvrABC system protein B.